A 294-amino-acid polypeptide reads, in one-letter code: ATP synthase gamma chain (294 aa).

Belongs to the ATPase gamma chain family. As to quaternary structure, F-type ATPases have 2 components, CF(1) - the catalytic core - and CF(0) - the membrane proton channel. CF(1) has five subunits: alpha(3), beta(3), gamma(1), delta(1), epsilon(1). CF(0) has three main subunits: a, b and c.

It localises to the cell inner membrane. Its function is as follows. Produces ATP from ADP in the presence of a proton gradient across the membrane. The gamma chain is believed to be important in regulating ATPase activity and the flow of protons through the CF(0) complex. The sequence is that of ATP synthase gamma chain from Campylobacter jejuni subsp. doylei (strain ATCC BAA-1458 / RM4099 / 269.97).